The sequence spans 101 residues: UPF0473 protein STER_1939 (101 aa).

Belongs to the UPF0473 family.

The chain is UPF0473 protein STER_1939 from Streptococcus thermophilus (strain ATCC BAA-491 / LMD-9).